The chain runs to 287 residues: Putative inactive carboxylesterase 4 (287 aa).

A signal peptide spans 1–18 (MWLPALVLATLAASAAWA). Asparagine 80 is a glycosylation site (N-linked (GlcNAc...) asparagine).

Belongs to the type-B carboxylesterase/lipase family. In terms of tissue distribution, expressed in placenta.

It is found in the secreted. Has no esterase activity. This chain is Putative inactive carboxylesterase 4 (CES1P1), found in Homo sapiens (Human).